Reading from the N-terminus, the 713-residue chain is Methionine--tRNA ligase (713 aa).

A 'HIGH' region motif is present at residues 17–27 (PYANGPIHIGH). Zn(2+)-binding residues include Cys-149, Cys-152, Cys-162, and Cys-165. Positions 345 to 349 (KLSTS) match the 'KMSKS' region motif. Thr-348 is an ATP binding site. The segment at 530 to 564 (VRTSTPDDDPAGAVGWEDAGAPLLPAGHPIPSGPD) is disordered. One can recognise a tRNA-binding domain in the interval 614–713 (DFTQLDLRAG…TEAEDGSVVR (100 aa)).

It belongs to the class-I aminoacyl-tRNA synthetase family. MetG type 1 subfamily. Homodimer. The cofactor is Zn(2+).

It is found in the cytoplasm. It carries out the reaction tRNA(Met) + L-methionine + ATP = L-methionyl-tRNA(Met) + AMP + diphosphate. Is required not only for elongation of protein synthesis but also for the initiation of all mRNA translation through initiator tRNA(fMet) aminoacylation. In Salinibacter ruber (strain DSM 13855 / M31), this protein is Methionine--tRNA ligase.